We begin with the raw amino-acid sequence, 226 residues long: Ribonuclease 3 (226 aa).

An RNase III domain is found at 6–128 (INKLQRKLGY…LIGGVFLDSD (123 aa)). A Mg(2+)-binding site is contributed by glutamate 41. The active site involves aspartate 45. Mg(2+)-binding residues include aspartate 114 and glutamate 117. Residue glutamate 117 is part of the active site. The DRBM domain maps to 155 to 225 (DPKTRLQEFL…AEQALIKLGI (71 aa)).

The protein belongs to the ribonuclease III family. In terms of assembly, homodimer. The cofactor is Mg(2+).

Its subcellular location is the cytoplasm. It catalyses the reaction Endonucleolytic cleavage to 5'-phosphomonoester.. Digests double-stranded RNA. Involved in the processing of primary rRNA transcript to yield the immediate precursors to the large and small rRNAs (23S and 16S). Processes some mRNAs, and tRNAs when they are encoded in the rRNA operon. Processes pre-crRNA and tracrRNA of type II CRISPR loci if present in the organism. The sequence is that of Ribonuclease 3 from Erwinia tasmaniensis (strain DSM 17950 / CFBP 7177 / CIP 109463 / NCPPB 4357 / Et1/99).